The sequence spans 238 residues: Large ribosomal subunit protein uL2 (238 aa).

A disordered region spans residues 201–238 (PFGGGGRQHPGRPKTVSRNTPPGRKVGSIAARRTGVGH).

This sequence belongs to the universal ribosomal protein uL2 family. In terms of assembly, part of the 50S ribosomal subunit. Forms a bridge to the 30S subunit in the 70S ribosome.

Its function is as follows. One of the primary rRNA binding proteins. Required for association of the 30S and 50S subunits to form the 70S ribosome, for tRNA binding and peptide bond formation. It has been suggested to have peptidyltransferase activity; this is somewhat controversial. Makes several contacts with the 16S rRNA in the 70S ribosome. The chain is Large ribosomal subunit protein uL2 from Methanocella arvoryzae (strain DSM 22066 / NBRC 105507 / MRE50).